A 92-amino-acid chain; its full sequence is DNA-directed RNA polymerase subunit Rpo11 (92 aa).

It belongs to the archaeal Rpo11/eukaryotic RPB11/RPC19 RNA polymerase subunit family. In terms of assembly, part of the RNA polymerase complex.

The protein localises to the cytoplasm. The catalysed reaction is RNA(n) + a ribonucleoside 5'-triphosphate = RNA(n+1) + diphosphate. Functionally, DNA-dependent RNA polymerase (RNAP) catalyzes the transcription of DNA into RNA using the four ribonucleoside triphosphates as substrates. This is DNA-directed RNA polymerase subunit Rpo11 from Methanosarcina barkeri (strain Fusaro / DSM 804).